The chain runs to 212 residues: Peptide methionine sulfoxide reductase MsrA (212 aa).

Cys52 is an active-site residue.

This sequence belongs to the MsrA Met sulfoxide reductase family.

It carries out the reaction L-methionyl-[protein] + [thioredoxin]-disulfide + H2O = L-methionyl-(S)-S-oxide-[protein] + [thioredoxin]-dithiol. The catalysed reaction is [thioredoxin]-disulfide + L-methionine + H2O = L-methionine (S)-S-oxide + [thioredoxin]-dithiol. Functionally, has an important function as a repair enzyme for proteins that have been inactivated by oxidation. Catalyzes the reversible oxidation-reduction of methionine sulfoxide in proteins to methionine. This Salmonella agona (strain SL483) protein is Peptide methionine sulfoxide reductase MsrA.